Here is a 709-residue protein sequence, read N- to C-terminus: ATP-binding cassette sub-family F member 3 (709 aa).

Residue Ala-2 is modified to N-acetylalanine. Ser-83 carries the phosphoserine modification. Basic and acidic residues predominate over residues 129–143 (RLKAKQEKRSEKDTL). Positions 129 to 171 (RLKAKQEKRSEKDTLKTSNPLVLEEASASQAGSRKESRLESSG) are disordered. 3 positions are modified to phosphoserine: Ser-155, Ser-157, and Ser-161. A compositionally biased stretch (basic and acidic residues) spans 161-171 (SRKESRLESSG). 2 ABC transporter domains span residues 178 to 424 (VRIE…LNQQ) and 492 to 707 (LQLD…RREG). 210–217 (GRNGLGKT) provides a ligand contact to ATP. Ser-283 carries the post-translational modification Phosphoserine. 525–532 (GENGAGKS) serves as a coordination point for ATP.

Belongs to the ABC transporter superfamily. ABCF family. EF3 subfamily.

Its function is as follows. Displays an antiviral effect against flaviviruses such as west Nile virus (WNV) in the presence of OAS1B. The sequence is that of ATP-binding cassette sub-family F member 3 (ABCF3) from Homo sapiens (Human).